A 178-amino-acid polypeptide reads, in one-letter code: Endothelin-2 (178 aa).

Positions 1 to 24 (MVAVPTAWCSVALALLLALQEGKG) are cleaved as a signal peptide. Positions 25–46 (QVAAAPDHPAPSPRARGSHLRP) are excised as a propeptide. 2 disulfide bridges follow: Cys-49-Cys-63 and Cys-51-Cys-59. The propeptide occupies 70-178 (VNTPGQTAPY…RPMYPRRRKT (109 aa)). Residues 96-111 (CECSSSGDPACATFCH) are endothelin-like. Positions 158–178 (ARQHQEAEREPRPMYPRRRKT) are disordered. A compositionally biased stretch (basic and acidic residues) spans 160–169 (QHQEAEREPR).

The protein belongs to the endothelin/sarafotoxin family.

It is found in the secreted. Functionally, endothelins are endothelium-derived vasoconstrictor peptides. This is Endothelin-2 (EDN2) from Mustela putorius furo (European domestic ferret).